Reading from the N-terminus, the 673-residue chain is DNA ligase (673 aa).

Residues 34–38 (DAEYD), 83–84 (SL), and E116 each bind NAD(+). Catalysis depends on K118, which acts as the N6-AMP-lysine intermediate. NAD(+)-binding residues include R139, E176, K293, and K317. 4 residues coordinate Zn(2+): C411, C414, C429, and C435. The BRCT domain maps to 595 to 673 (NQQNPFFGKT…EDEFLKWVNS (79 aa)).

This sequence belongs to the NAD-dependent DNA ligase family. LigA subfamily. The cofactor is Mg(2+). Mn(2+) serves as cofactor.

The catalysed reaction is NAD(+) + (deoxyribonucleotide)n-3'-hydroxyl + 5'-phospho-(deoxyribonucleotide)m = (deoxyribonucleotide)n+m + AMP + beta-nicotinamide D-nucleotide.. Its function is as follows. DNA ligase that catalyzes the formation of phosphodiester linkages between 5'-phosphoryl and 3'-hydroxyl groups in double-stranded DNA using NAD as a coenzyme and as the energy source for the reaction. It is essential for DNA replication and repair of damaged DNA. In Legionella pneumophila (strain Corby), this protein is DNA ligase.